The chain runs to 202 residues: Imidazoleglycerol-phosphate dehydratase (202 aa).

Belongs to the imidazoleglycerol-phosphate dehydratase family.

It is found in the cytoplasm. It catalyses the reaction D-erythro-1-(imidazol-4-yl)glycerol 3-phosphate = 3-(imidazol-4-yl)-2-oxopropyl phosphate + H2O. The protein operates within amino-acid biosynthesis; L-histidine biosynthesis; L-histidine from 5-phospho-alpha-D-ribose 1-diphosphate: step 6/9. The polypeptide is Imidazoleglycerol-phosphate dehydratase (Rhodopirellula baltica (strain DSM 10527 / NCIMB 13988 / SH1)).